The primary structure comprises 279 residues: Probable endonuclease 4 (279 aa).

His74, His112, Glu147, Asp180, His183, His214, Asp227, His229, and Glu259 together coordinate Zn(2+).

This sequence belongs to the AP endonuclease 2 family. Zn(2+) serves as cofactor.

It catalyses the reaction Endonucleolytic cleavage to 5'-phosphooligonucleotide end-products.. In terms of biological role, endonuclease IV plays a role in DNA repair. It cleaves phosphodiester bonds at apurinic or apyrimidinic (AP) sites, generating a 3'-hydroxyl group and a 5'-terminal sugar phosphate. This is Probable endonuclease 4 from Mycoplasma mobile (strain ATCC 43663 / 163K / NCTC 11711) (Mesomycoplasma mobile).